The primary structure comprises 176 residues: Glycine-rich RNA-binding protein 7 (176 aa).

A2 carries the N-acetylalanine modification. The tract at residues 2-41 (ASGDVEYRCFVGGLAWATDDRALETAFAQYGDVIDSKIIN) is required for RNA chaperone activity. Residues 8 to 86 (YRCFVGGLAW…RSITVNEAQS (79 aa)) form the RRM domain. R49 carries the post-translational modification ADP-ribosylarginine; by HopU1. Positions 83-103 (EAQSRGSGGGGGHRGGGGGGY) are disordered. Residues 88–103 (GSGGGGGHRGGGGGGY) show a composition bias toward gly residues. The tract at residues 88–175 (GSGGGGGHRG…GYGGSGGGGG (88 aa)) is glycine-rich (GR) required for cell-to-cell movement. The tract at residues 97-148 (GGGGGGYRSGGGGGYSGGGGSYGGGGGRREGGGGYSGGGGGYSSRGGGGGSY) is nuclear targeting sequence (M9). Phosphoserine is present on residues S105 and S117. The disordered stretch occupies residues 131-176 (YSGGGGGYSSRGGGGGSYGGGRREGGGGYGGGEGGGYGGSGGGGGW).

The protein belongs to the GR-RBP family. In terms of assembly, interacts with TRN1. Interacts with the Pseudomonas syringae type III effector HopU1. Binds to small phloem-mobile single-stranded RNAs (ss-sRNA, e.g. small interfering RNA (siRNA) and microRNA (miRNA)) in the phloeme exudate, including viral-derived sRNA (vsiRNA). In terms of processing, ADP-ribosylated by the Pseudomonas syringae type III effector HopU1. ADP-ribosylation reduces the ability of the protein to bind RNA. As to expression, ubiquitous with strong expression in guard cell.

It localises to the cytoplasm. The protein resides in the nucleus. It is found in the secreted. Functionally, plays a role in RNA transcription or processing during stress. Binds RNAs and DNAs sequence with a preference to single-stranded nucleic acids. Displays strong affinity to poly(U) and poly(G) sequence. Involved in mRNA alternative splicing of numerous targets by modulating splice site selection. Negatively regulates the circadian oscillations of its own transcript as well as RBG8 transcript. Forms an interlocked post-transcriptional negative feedback loop with the RBG8 autoregulatory circuit. Both proteins negatively autoregulate and reciprocally crossregulate by binding to their pre-mRNAs and promoting unproductive splicing coupled to degradation via the NMD pathway. Involved in the regulation of abscisic acid and stress responses. Affects the growth and stress tolerance under high salt and dehydration stress conditions, and also confers freezing tolerance, particularly via the regulation of stomatal opening and closing in the guard cells. Exhibits RNA chaperone activity during the cold adaptation process. Involved in the export of mRNAs from the nucleus to the cytoplasm under cold stress conditions. Target of the Pseudomonas syringae type III effector HopU1, which could probably be involved in plant innate immunity. Component of the flowering autonomous pathway which promotes floral transition, at least partly by down-regulating FLC. Mediates cell-to-cell trafficking of RNA interference (RNAi) signals (small RNAs (sRNA), e.g. small interfering RNA (siRNA) and microRNA (miRNA)) which regulate growth and development, as well as responses to environmental inputs, including pathogen attack; can compromise zucchini yellow mosaic virus (ZYMV) and tobacco rattle virus (TRV) infections at the early stage. The protein is Glycine-rich RNA-binding protein 7 of Arabidopsis thaliana (Mouse-ear cress).